The following is a 725-amino-acid chain: Consortin (725 aa).

5 disordered regions span residues Met-1–Asn-72, Gly-103–Ile-124, Leu-296–Val-353, Thr-375–Asp-397, and Gln-485–Leu-510. At Met-1–Ser-664 the chain is on the cytoplasmic side. Positions Val-63–Asn-72 are enriched in polar residues. Positions Pro-109–Ala-121 are enriched in basic residues. A compositionally biased stretch (basic and acidic residues) spans Glu-300–Ser-314. Polar residues-rich tracts occupy residues Asp-343 to Val-353 and Thr-375 to Asp-388. Residues Cys-665–Leu-685 form a helical membrane-spanning segment. Over Tyr-686–Ser-725 the chain is Extracellular.

Belongs to the CNST family. As to quaternary structure, interacts with connexins GJA1/CX43, GJB1/CX32, GJB2/CX26, GJB3/CX31, GJB6/CX30 and GJC1/CX45. Also interacts with GGA1 and GGA2. Does not interact with PANX1.

The protein localises to the cell membrane. The protein resides in the golgi apparatus. It localises to the trans-Golgi network membrane. It is found in the cytoplasmic vesicle. Its subcellular location is the secretory vesicle. In terms of biological role, required for targeting of connexins to the plasma membrane. The sequence is that of Consortin (CNST) from Homo sapiens (Human).